A 132-amino-acid polypeptide reads, in one-letter code: Small ribosomal subunit protein uS8 (132 aa).

The protein belongs to the universal ribosomal protein uS8 family. As to quaternary structure, part of the 30S ribosomal subunit. Contacts proteins S5 and S12.

Functionally, one of the primary rRNA binding proteins, it binds directly to 16S rRNA central domain where it helps coordinate assembly of the platform of the 30S subunit. This chain is Small ribosomal subunit protein uS8, found in Levilactobacillus brevis (strain ATCC 367 / BCRC 12310 / CIP 105137 / JCM 1170 / LMG 11437 / NCIMB 947 / NCTC 947) (Lactobacillus brevis).